The following is a 134-amino-acid chain: Translation initiation factor 2 subunit beta (134 aa).

It belongs to the eIF-2-beta/eIF-5 family. Heterotrimer composed of an alpha, a beta and a gamma chain.

Its function is as follows. eIF-2 functions in the early steps of protein synthesis by forming a ternary complex with GTP and initiator tRNA. This is Translation initiation factor 2 subunit beta from Pyrobaculum arsenaticum (strain DSM 13514 / JCM 11321 / PZ6).